The following is a 152-amino-acid chain: Transcriptional repressor NrdR (152 aa).

A zinc finger lies at 3–34 (CPACQHNGTRVLDSRPVDEGRSIRRRRECESC). An ATP-cone domain is found at 49–139 (LIVVKKEGIR…VYRQFKDINV (91 aa)).

This sequence belongs to the NrdR family. Zn(2+) serves as cofactor.

Negatively regulates transcription of bacterial ribonucleotide reductase nrd genes and operons by binding to NrdR-boxes. This Bacillus licheniformis (strain ATCC 14580 / DSM 13 / JCM 2505 / CCUG 7422 / NBRC 12200 / NCIMB 9375 / NCTC 10341 / NRRL NRS-1264 / Gibson 46) protein is Transcriptional repressor NrdR.